Here is an 819-residue protein sequence, read N- to C-terminus: MSNIQNMSLEDIMGERFGRYSKYIIQERALPDIRDGLKPVQRRILYSMNKDGNTFEKGYRKSAKSVGNIMGNFHPHGDSSIYDAMVRMSQDWKNREILVEMHGNNGSMDGDPPAAMRYTEARLSEIAGYLLQDIEKNTVPFAWNFDDTEKEPTVLPAAFPNLLVNGSSGISAGYATDIPPHNLSEVIDAVVYMIDHPKASLEKLMEFLPGPDFPTGGIIQGADEIKKAYETGKGRVVVRSRTEIEELKGGKQQIIVTEIPYEVNKAVLVKKIDDVRVNNKVPGIVEVRDESDRTGLRIAIELKKDADSQTILNYLLKYTDLQVNYNFNMVAIDHFTPRQVGLQKILSSYISHRKDIIIERSKFDKAKAEKRLHIVEGLIRVLSILDEIIALIRSSDNKADAKENLKVSYDFSEEQAEAIVTLQLYRLTNTDIVTLQNEENDLRDLITTLSAIIGDEATMYNVMKRELREVKKKFANPRLSELQAESQIIEIDTASLIAEEETFVSVTRGGYLKRTSPRSFNASSLEEVGKRDDDELIFVKQAKTTEHLLLFTTLGNVIYRPIHELTDLRWKDIGEHLSQTISNFATEEEILYADIVTSFDQGLYVAVTQNGFIKRFDRKELSPWRTYKSKSTKYVKLKDDKDRVVTLSPVIMEDLLLVTKNGYALRFSSQEVPIQGLKSAGVKGINLKNDDSLASAFAVTSNSFFVLTQRGSLKRMAVDDIPQTSRANRGLLVLRELKTKPHRVFLAGGVQSDTSAEQFDLFTDIPEEETNQQMLEVISKTGQTYEIALETLSLSERTSNGSFISDTISDQEVLVARTR.

Residues 30 to 496 (LPDIRDGLKP…QIIEIDTASL (467 aa)) form the Topo IIA-type catalytic domain. Y118 acts as the O-(5'-phospho-DNA)-tyrosine intermediate in catalysis.

Belongs to the type II topoisomerase GyrA/ParC subunit family. ParC type 2 subfamily. As to quaternary structure, heterotetramer composed of ParC and ParE.

It localises to the cell membrane. The enzyme catalyses ATP-dependent breakage, passage and rejoining of double-stranded DNA.. In terms of biological role, topoisomerase IV is essential for chromosome segregation. It relaxes supercoiled DNA. Performs the decatenation events required during the replication of a circular DNA molecule. This Streptococcus pyogenes serotype M18 (strain MGAS8232) protein is DNA topoisomerase 4 subunit A.